Consider the following 188-residue polypeptide: Crossover junction endodeoxyribonuclease RuvC (188 aa).

Residues Asp7, Glu68, and Asp141 contribute to the active site. Residues Asp7, Glu68, and Asp141 each coordinate Mg(2+).

This sequence belongs to the RuvC family. In terms of assembly, homodimer which binds Holliday junction (HJ) DNA. The HJ becomes 2-fold symmetrical on binding to RuvC with unstacked arms; it has a different conformation from HJ DNA in complex with RuvA. In the full resolvosome a probable DNA-RuvA(4)-RuvB(12)-RuvC(2) complex forms which resolves the HJ. Requires Mg(2+) as cofactor.

The protein resides in the cytoplasm. The enzyme catalyses Endonucleolytic cleavage at a junction such as a reciprocal single-stranded crossover between two homologous DNA duplexes (Holliday junction).. In terms of biological role, the RuvA-RuvB-RuvC complex processes Holliday junction (HJ) DNA during genetic recombination and DNA repair. Endonuclease that resolves HJ intermediates. Cleaves cruciform DNA by making single-stranded nicks across the HJ at symmetrical positions within the homologous arms, yielding a 5'-phosphate and a 3'-hydroxyl group; requires a central core of homology in the junction. The consensus cleavage sequence is 5'-(A/T)TT(C/G)-3'. Cleavage occurs on the 3'-side of the TT dinucleotide at the point of strand exchange. HJ branch migration catalyzed by RuvA-RuvB allows RuvC to scan DNA until it finds its consensus sequence, where it cleaves and resolves the cruciform DNA. The polypeptide is Crossover junction endodeoxyribonuclease RuvC (Streptomyces coelicolor (strain ATCC BAA-471 / A3(2) / M145)).